Reading from the N-terminus, the 688-residue chain is Translation initiation factor IF-2 (688 aa).

The tract at residues 53–101 (GAEKPSVADEFEVEEKVVRSKKNSNKNKKKGKANEDKRQDNFAGRQQTP) is disordered. Residues 71–83 (RSKKNSNKNKKKG) are compositionally biased toward basic residues. Residues 190–359 (ERPAVVTIMG…LLVSEVEEYK (170 aa)) enclose the tr-type G domain. The segment at 199–206 (GHVDHGKT) is G1. Residue 199–206 (GHVDHGKT) participates in GTP binding. The interval 224–228 (GITQH) is G2. The tract at residues 245-248 (DTPG) is G3. Residues 245 to 249 (DTPGH) and 299 to 302 (NKMD) each bind GTP. Positions 299–302 (NKMD) are G4. Residues 335–337 (SAI) form a G5 region.

It belongs to the TRAFAC class translation factor GTPase superfamily. Classic translation factor GTPase family. IF-2 subfamily.

It localises to the cytoplasm. Functionally, one of the essential components for the initiation of protein synthesis. Protects formylmethionyl-tRNA from spontaneous hydrolysis and promotes its binding to the 30S ribosomal subunits. Also involved in the hydrolysis of GTP during the formation of the 70S ribosomal complex. In Bacillus mycoides (strain KBAB4) (Bacillus weihenstephanensis), this protein is Translation initiation factor IF-2.